Reading from the N-terminus, the 354-residue chain is Guanine nucleotide-binding protein alpha-3 subunit (354 aa).

Gly2 is lipidated: N-myristoyl glycine. Cys4 carries the S-palmitoyl cysteine lipid modification. One can recognise a G-alpha domain in the interval 32-354 (KVVKLLLLGA…QANLQGCGLY (323 aa)). A G1 motif region spans residues 35–48 (KLLLLGAGECGKST). Residues 40 to 47 (GAGECGKS), 176 to 182 (LLSRIKT), 201 to 205 (DVGGQ), 270 to 273 (NKKD), and Ala326 each bind GTP. 2 residues coordinate Mg(2+): Ser47 and Thr182. The interval 174–182 (DILLSRIKT) is G2 motif. Residues 197–206 (FRVFDVGGQR) are G3 motif. Residues 266 to 273 (ILFLNKKD) are G4 motif. The G5 motif stretch occupies residues 324 to 329 (TCATDT).

It belongs to the G-alpha family. G(q) subfamily. In terms of assembly, g proteins are composed of 3 units; alpha, beta and gamma. The alpha chain contains the guanine nucleotide binding site.

Its function is as follows. Guanine nucleotide-binding proteins (G proteins) are involved as modulators or transducers in various transmembrane signaling systems. Promotes transcription of 3',5'-cyclic phosphodiesterases pde-1 and pde-5, leading to reduced cGMP levels in sensory neurons. This causes suppression of insulin production and signaling which leads to increased daf-16 activity and contributes to increased adult lifespan and resistance to oxidative stress. In addition, by reducing cGMP levels, inhibits TGF-beta signaling pathways. Involved in behavioral response to P.aeruginosa by controlling the expression of daf-7, a member of the TGF-beta family, in ASJ sensory neurons. In Caenorhabditis briggsae, this protein is Guanine nucleotide-binding protein alpha-3 subunit (gpa-3).